A 255-amino-acid polypeptide reads, in one-letter code: Coiled-coil domain-containing 92B (255 aa).

Residues 28–90 adopt a coiled-coil conformation; the sequence is LRDLHLEILR…AAANAELRRE (63 aa). Positions 149–255 are disordered; that stretch reads QRLQAPRPGP…SQPSAPGDPE (107 aa). A compositionally biased stretch (basic residues) spans 166–177; sequence PRRRALRARRPP. Over residues 242–255 the composition is skewed to pro residues; the sequence is QPAPSQPSAPGDPE.

This is Coiled-coil domain-containing 92B from Homo sapiens (Human).